Consider the following 160-residue polypeptide: MATEVVDVLVTGGKATAGPPLGPAVGPLGINIMNVVKEINEKTKDYAGMSVPVKVIVNTDDRSFEIEVGIPPTSALIKTELGLDKGSTEPKAIVAGNLSMEQAVKIAKMKKDSMLSFTLKNATKEVIGTCVSTGINVEGMSPRDAQKAIDAGEFDEYFNE.

It belongs to the universal ribosomal protein uL11 family. As to quaternary structure, part of the ribosomal stalk of the 50S ribosomal subunit. Interacts with L10 and the large rRNA to form the base of the stalk. L10 forms an elongated spine to which L12 dimers bind in a sequential fashion forming a multimeric L10(L12)X complex.

In terms of biological role, forms part of the ribosomal stalk which helps the ribosome interact with GTP-bound translation factors. The protein is Large ribosomal subunit protein uL11 of Methanococcus aeolicus (strain ATCC BAA-1280 / DSM 17508 / OCM 812 / Nankai-3).